Consider the following 160-residue polypeptide: Complexin-4 (160 aa).

Residues 14–44 (KNLGFGGGSEEKKEEGGTSDPAAAKGMTREE) form a disordered region. Position 157 is a cysteine methyl ester (Cys-157). Residue Cys-157 is the site of S-farnesyl cysteine attachment. Positions 158–160 (SVM) are cleaved as a propeptide — removed in mature form.

This sequence belongs to the complexin/synaphin family. In terms of assembly, weakly binds to the SNARE core complex containing SNAP25, VAMP2 and STX1A. In terms of processing, farnesylation mediates presynaptic targeting and is important for function in neurotransmitter release. In terms of tissue distribution, present specifically in the retina (at protein level). Expressed in the outer nuclear layer of the retina (at protein level). Strongly expressed at rod photoreceptor ribbon synapses (at protein level). Not expressed at conventional amacrine cell synapses, nor at cone photoreceptor ribbon synapses (at protein level). Weakly expressed at cone photoreceptor synaptic terminals (at protein level). Not expressed in the brain (at protein level).

It localises to the synapse. It is found in the cell membrane. In terms of biological role, complexin that regulates SNARE protein complex-mediated synaptic vesicle fusion. Required for the maintenance of synaptic ultrastructure in the adult retina. Positively regulates synaptic transmission through synaptic vesicle availability and exocytosis of neurotransmitters at photoreceptor ribbon synapses in the retina. Suppresses tonic photoreceptor activity and baseline 'noise' by suppression of Ca(2+) vesicle tonic release and the facilitation of evoked synchronous and asynchronous Ca(2+) vesicle release. This is Complexin-4 (Cplx4) from Mus musculus (Mouse).